The following is a 378-amino-acid chain: Cytochrome b (378 aa).

The next 4 membrane-spanning stretches (helical) occupy residues 34-54 (FGSL…FLSM), 78-100 (WLLR…CHIG), 113-133 (TWNV…VGYV), and 179-199 (FFSF…VHLL). Residues His84 and His98 each contribute to the heme b site. His183 and His197 together coordinate heme b. His202 is a binding site for a ubiquinone. 4 consecutive transmembrane segments (helical) span residues 225–245 (YSTK…IVVL), 289–306 (LGGV…FCLP), 313–342 (KFRS…WIGM), and 350–369 (IFIG…LNPL).

It belongs to the cytochrome b family. In terms of assembly, the main subunits of complex b-c1 are: cytochrome b, cytochrome c1 and the Rieske protein. Heme b serves as cofactor.

Its subcellular location is the mitochondrion inner membrane. In terms of biological role, component of the ubiquinol-cytochrome c reductase complex (complex III or cytochrome b-c1 complex) that is part of the mitochondrial respiratory chain. The b-c1 complex mediates electron transfer from ubiquinol to cytochrome c. Contributes to the generation of a proton gradient across the mitochondrial membrane that is then used for ATP synthesis. In Loxocorone allax (Goblet worm), this protein is Cytochrome b (mt:Cyt-b).